The sequence spans 125 residues: Small ribosomal subunit protein mS41 (125 aa).

The N-terminal 23 residues, methionine 1–lysine 23, are a transit peptide targeting the mitochondrion.

Belongs to the mitochondrion-specific ribosomal protein mS41 family.

It localises to the mitochondrion. Functionally, involved in telomere length regulation. The sequence is that of Small ribosomal subunit protein mS41 (FYV4) from Kluyveromyces lactis (strain ATCC 8585 / CBS 2359 / DSM 70799 / NBRC 1267 / NRRL Y-1140 / WM37) (Yeast).